A 215-amino-acid chain; its full sequence is Cytochrome b6 (215 aa).

The chain crosses the membrane as a helical span at residues 32–52 (IFYCLGGITLTCFLIQVATGF). C35 provides a ligand contact to heme c. Positions 86 and 100 each coordinate heme b. 3 helical membrane-spanning segments follow: residues 90–110 (ASMM…TGGF), 116–136 (LTWV…VTGY), and 186–206 (LHTF…FLMI). The heme b site is built by H187 and H202.

Belongs to the cytochrome b family. PetB subfamily. As to quaternary structure, the 4 large subunits of the cytochrome b6-f complex are cytochrome b6, subunit IV (17 kDa polypeptide, PetD), cytochrome f and the Rieske protein, while the 4 small subunits are PetG, PetL, PetM and PetN. The complex functions as a dimer. Requires heme b as cofactor. Heme c is required as a cofactor.

The protein resides in the plastid. The protein localises to the chloroplast thylakoid membrane. In terms of biological role, component of the cytochrome b6-f complex, which mediates electron transfer between photosystem II (PSII) and photosystem I (PSI), cyclic electron flow around PSI, and state transitions. The sequence is that of Cytochrome b6 from Spirogyra maxima (Green alga).